Here is a 208-residue protein sequence, read N- to C-terminus: 3-isopropylmalate dehydratase small subunit (208 aa).

It belongs to the LeuD family. LeuD type 1 subfamily. In terms of assembly, heterodimer of LeuC and LeuD.

It carries out the reaction (2R,3S)-3-isopropylmalate = (2S)-2-isopropylmalate. The protein operates within amino-acid biosynthesis; L-leucine biosynthesis; L-leucine from 3-methyl-2-oxobutanoate: step 2/4. Its function is as follows. Catalyzes the isomerization between 2-isopropylmalate and 3-isopropylmalate, via the formation of 2-isopropylmaleate. In Granulibacter bethesdensis (strain ATCC BAA-1260 / CGDNIH1), this protein is 3-isopropylmalate dehydratase small subunit.